Here is a 582-residue protein sequence, read N- to C-terminus: UPF0329 protein ECU07_0070 (582 aa).

A disordered region spans residues 326–386; it reads EEKAKSKKKG…KTGKKSKGDQ (61 aa). The segment covering 330 to 339 has biased composition (basic residues); it reads KSKKKGKKKS. A compositionally biased stretch (basic and acidic residues) spans 344 to 354; the sequence is EAKEEEKKESG.

This sequence belongs to the UPF0329 family.

In Encephalitozoon cuniculi (strain GB-M1) (Microsporidian parasite), this protein is UPF0329 protein ECU07_0070.